We begin with the raw amino-acid sequence, 298 residues long: Probable endonuclease 4 (298 aa).

9 residues coordinate Zn(2+): His69, His111, Glu146, Asp180, His183, His215, Asp228, His230, and Glu260.

Belongs to the AP endonuclease 2 family. The cofactor is Zn(2+).

It catalyses the reaction Endonucleolytic cleavage to 5'-phosphooligonucleotide end-products.. Endonuclease IV plays a role in DNA repair. It cleaves phosphodiester bonds at apurinic or apyrimidinic (AP) sites, generating a 3'-hydroxyl group and a 5'-terminal sugar phosphate. This chain is Probable endonuclease 4, found in Bacillus cereus (strain G9842).